The sequence spans 46 residues: Photosystem II reaction center protein Psb30 (46 aa).

Met1 carries the post-translational modification N-formylmethionine. Residues 1–20 (MGIFNGIIEFLSNINFEVIA) lie on the Lumenal side of the membrane. The chain crosses the membrane as a helical span at residues 21–38 (QLTMIAMIGIAGPMIIFL). Residues 39 to 46 (LAVRRGNL) lie on the Cytoplasmic side of the membrane.

Belongs to the Psb30/Ycf12 family. As to quaternary structure, PSII is composed of 1 copy each of membrane proteins PsbA, PsbB, PsbC, PsbD, PsbE, PsbF, PsbH, PsbI, PsbJ, PsbK, PsbL, PsbM, PsbT, PsbX, PsbY, PsbZ, Psb30/Ycf12, peripheral proteins PsbO, CyanoQ (PsbQ), PsbU, PsbV and a large number of cofactors. It forms dimeric complexes. Part of a photosystem II (PSII) assembly intermediate complex PSII-I; crystallized from a strain deleted of psbJ, it forms monomeric PSII before addition of the oxygen evolving complex. PSII-I includes 3 assembly factors not found in mature PSII (Psb27, Psb28 and Psb34). It depends on PSII binds multiple chlorophylls, carotenoids and specific lipids. as a cofactor.

It localises to the cellular thylakoid membrane. A core subunit of photosystem II (PSII). PSII is a light-driven water plastoquinone oxidoreductase, using light energy to abstract electrons from H(2)O, generating a proton gradient subsequently used for ATP formation. Helps stabilize PSII. In Thermosynechococcus vestitus (strain NIES-2133 / IAM M-273 / BP-1), this protein is Photosystem II reaction center protein Psb30.